Consider the following 315-residue polypeptide: Probable cytosolic iron-sulfur protein assembly protein CIAO1 homolog (315 aa).

WD repeat units lie at residues G11–K50, G56–C95, G100–C139, C145–D188, K189–E229, R236–R275, and A283–D315.

Belongs to the WD repeat CIA1 family.

In terms of biological role, essential component of the cytosolic iron-sulfur (Fe/S) protein assembly machinery. Required for the maturation of extramitochondrial Fe/S proteins. The polypeptide is Probable cytosolic iron-sulfur protein assembly protein CIAO1 homolog (Ixodes scapularis (Black-legged tick)).